The sequence spans 77 residues: Distinctin-like peptide (77 aa).

Residues 1–19 (LKKSLFLVTFLALVPLFLC) form the signal peptide. Positions 20–39 (EEEKREEENEERQDDDQSEE) are excised as a propeptide.

It belongs to the frog skin active peptide (FSAP) family. As to expression, expressed by the skin glands.

The protein resides in the secreted. Functionally, has antimicrobial activity. This Pithecopus azureus (Orange-legged monkey tree frog) protein is Distinctin-like peptide.